Reading from the N-terminus, the 258-residue chain is Sec-independent protein translocase protein TatC (258 aa).

Over 2–23 (SVEDTQPLITHLIELRKRLLNC) the chain is Cytoplasmic. Residues 24 to 44 (IIAVIVIFLCLVYFANDIYHL) form a helical membrane-spanning segment. The Periplasmic segment spans residues 45-75 (VSAPLIKQLPQGSTMIATDVASPFFTPIKLT). Residues 76–96 (FMVSLILSAPVILYQVWAFIA) form a helical membrane-spanning segment. The Cytoplasmic portion of the chain corresponds to 97 to 115 (PALYKHERRLVVPLLVSSS). The helical transmembrane segment at 116 to 136 (LLFYIGMAFAYFVVFPLAFGF) threads the bilayer. Residues 137–156 (LANTAPEGVQVSTDIASYLS) are Periplasmic-facing. A helical membrane pass occupies residues 157–177 (FVMALFMAFGVSFEVPVAIVL). Topologically, residues 178–192 (LCWMGITSPEDLRKK) are cytoplasmic. The chain crosses the membrane as a helical span at residues 193–210 (RPYVLVGAFVVGMLLTPP). Aspartate 211 is a topological domain (periplasmic). The helical transmembrane segment at 212–232 (VFSQTLLAIPMYCLFEIGVFF) threads the bilayer. Residues 233–258 (SRFYVGKGRNREEENDAEAESEKTEE) lie on the Cytoplasmic side of the membrane.

Belongs to the TatC family. The Tat system comprises two distinct complexes: a TatABC complex, containing multiple copies of TatA, TatB and TatC subunits, and a separate TatA complex, containing only TatA subunits. Substrates initially bind to the TatABC complex, which probably triggers association of the separate TatA complex to form the active translocon. TatC can form a distinct, stable, multimeric complex independent of TatA and TatB. Each of TatA, TatB and TatC are able to interact in pairs without the third partner. Interacts with the signal sequence of DmsA and DmsD.

It localises to the cell inner membrane. Functionally, part of the twin-arginine translocation (Tat) system that transports large folded proteins containing a characteristic twin-arginine motif in their signal peptide across membranes. Together with TatB, TatC is part of a receptor directly interacting with Tat signal peptides. The sequence is that of Sec-independent protein translocase protein TatC from Escherichia coli (strain K12).